The following is a 1035-amino-acid chain: Sulfite reductase [NADPH] flavoprotein component (1035 aa).

The FAD-binding FR-type domain occupies 648 to 879 (VKNFVVKVKE…VKPSVMKLPP (232 aa)). FAD contacts are provided by residues 684-695 (YDIGEALGIHAR) and 814-824 (LKRREYSIASS).

The cofactor is FAD. Requires FMN as cofactor.

It catalyses the reaction hydrogen sulfide + 3 NADP(+) + 3 H2O = sulfite + 3 NADPH + 4 H(+). It functions in the pathway sulfur metabolism; hydrogen sulfide biosynthesis; hydrogen sulfide from sulfite (NADPH route): step 1/1. This enzyme catalyzes the 6-electron reduction of sulfite to sulfide. This is one of several activities required for the biosynthesis of L-cysteine from sulfate. In Saccharomyces cerevisiae (strain ATCC 204508 / S288c) (Baker's yeast), this protein is Sulfite reductase [NADPH] flavoprotein component (MET10).